The chain runs to 162 residues: Tegument protein BLRF2 (162 aa).

A coiled-coil region spans residues 12-43 (VKAVDMSMEDMAARLARLESENKALKQQVLRG). The interval 118–162 (SMLGAKGQPSPGEGTRPRESNDPNATRRARSRSRGREAKKVQISD) is disordered. Residues 151–162 (RGREAKKVQISD) are compositionally biased toward basic and acidic residues.

It belongs to the herpesviridae BLRF2 family. As to quaternary structure, homooligomer; homooligomerizes and binds double-stranded DNA (dsDNA) cooperatively. Interacts with host CGAS.

The protein resides in the virion tegument. It is found in the host cytoplasm. Plays a role in the inhibition of host innate immune system by targeting the CGAS enzymatic activity which is the principal cytosolic DNA sensor that detects invading viral DNA. Acts by inhibiting CGAS-DNA phase separation: directly binds double-stranded DNA (dsDNA) in a length dependent but sequence independent manner and is able to form DNA-induced phase separation in infected cells. DNA phase separation of ORF52 mediates disruption of liquid-like droplets in which CGAS is activated, thereby preventing CGAS activity. This chain is Tegument protein BLRF2, found in Homo sapiens (Human).